A 103-amino-acid chain; its full sequence is Vesicle-associated membrane protein 3 (103 aa).

Residues 1–25 are disordered; the sequence is MSTGVPSGSSAATGSNRRLQQTQNQ. Topologically, residues 1–81 are cytoplasmic; the sequence is MSTGVPSGSS…KRKYWWKNCK (81 aa). Positions 18-78 constitute a v-SNARE coiled-coil homology domain; sequence RLQQTQNQVD…AKLKRKYWWK (61 aa). Residues lysine 70, lysine 72, and lysine 81 each participate in a glycyl lysine isopeptide (Lys-Gly) (interchain with G-Cter in ubiquitin) cross-link. A helical; Anchor for type IV membrane protein transmembrane segment spans residues 82-102; sequence MWAIGISVLVIIVIIIIVWCV. A topological domain (vesicular) is located at residue serine 103.

This sequence belongs to the synaptobrevin family. As to quaternary structure, interacts with POPDC1 (via the C-terminus cytoplasmic tail). Interacts with BCAP31; involved in VAMP3 export from the endoplasmic reticulum. Interacts with BAIAP3; this interaction is increased in the presence of calcium. Interacts with PICALM. Post-translationally, ubiquitinated by RNF167 at Lys-70, Lys-72 and Lys-81, regulating the recycling endosome pathway. In terms of processing, (Microbial infection) Targeted and hydrolyzed by C.botulinum neurotoxin type D (BoNT/D, botD) which hydrolyzes the 46-Lys-|-Leu-47 bond and probably inhibits neurotransmitter release. (Microbial infection) Targeted and hydrolyzed by C.botulinum neurotoxin type F (BoNT/F, botF) which hydrolyzes the 45-Gln-|-Lys-46 bond and probably inhibits neurotransmitter release. Post-translationally, (Microbial infection) Targeted and hydrolyzed by C.tetani toxin (tetX) which hydrolyzes the 63-Gln-|-Phe-64 bond and probably inhibits neurotransmitter release. In terms of tissue distribution, ubiquitous.

The protein localises to the early endosome membrane. It localises to the recycling endosome membrane. Its subcellular location is the synapse. It is found in the synaptosome. Functionally, SNARE involved in vesicular transport from the late endosomes to the trans-Golgi network. The polypeptide is Vesicle-associated membrane protein 3 (Vamp3) (Rattus norvegicus (Rat)).